The primary structure comprises 445 residues: tRNA-2-methylthio-N(6)-dimethylallyladenosine synthase (445 aa).

The 122-residue stretch at 3–124 (KNLYIKTYGC…LPELISKIVR (122 aa)) folds into the MTTase N-terminal domain. C12, C48, C87, C162, C166, and C169 together coordinate [4Fe-4S] cluster. Residues 148–380 (YPQGASSFIS…QKELMDQQLA (233 aa)) form the Radical SAM core domain. In terms of domain architecture, TRAM spans 383–445 (ESCVGSTIKV…SLNSLTGEIL (63 aa)).

It belongs to the methylthiotransferase family. MiaB subfamily. In terms of assembly, monomer. Requires [4Fe-4S] cluster as cofactor.

It localises to the cytoplasm. It carries out the reaction N(6)-dimethylallyladenosine(37) in tRNA + (sulfur carrier)-SH + AH2 + 2 S-adenosyl-L-methionine = 2-methylsulfanyl-N(6)-dimethylallyladenosine(37) in tRNA + (sulfur carrier)-H + 5'-deoxyadenosine + L-methionine + A + S-adenosyl-L-homocysteine + 2 H(+). Its function is as follows. Catalyzes the methylthiolation of N6-(dimethylallyl)adenosine (i(6)A), leading to the formation of 2-methylthio-N6-(dimethylallyl)adenosine (ms(2)i(6)A) at position 37 in tRNAs that read codons beginning with uridine. This is tRNA-2-methylthio-N(6)-dimethylallyladenosine synthase from Rickettsia akari (strain Hartford).